Consider the following 99-residue polypeptide: UPF0213 protein RBAM_000440 (99 aa).

The GIY-YIG domain maps to asparagine 4–glutamine 79.

It belongs to the UPF0213 family.

The polypeptide is UPF0213 protein RBAM_000440 (Bacillus velezensis (strain DSM 23117 / BGSC 10A6 / LMG 26770 / FZB42) (Bacillus amyloliquefaciens subsp. plantarum)).